The following is a 223-amino-acid chain: Ribose-5-phosphate isomerase A (223 aa).

Substrate contacts are provided by residues threonine 26–threonine 29, aspartate 82–aspartate 85, and lysine 95–glycine 98. The active-site Proton acceptor is the glutamate 104. Lysine 122 is a binding site for substrate.

This sequence belongs to the ribose 5-phosphate isomerase family. Homodimer.

It carries out the reaction aldehydo-D-ribose 5-phosphate = D-ribulose 5-phosphate. The protein operates within carbohydrate degradation; pentose phosphate pathway; D-ribose 5-phosphate from D-ribulose 5-phosphate (non-oxidative stage): step 1/1. In terms of biological role, catalyzes the reversible conversion of ribose-5-phosphate to ribulose 5-phosphate. The protein is Ribose-5-phosphate isomerase A of Streptococcus agalactiae serotype V (strain ATCC BAA-611 / 2603 V/R).